A 538-amino-acid polypeptide reads, in one-letter code: Putative cysteine ligase BshC (538 aa).

Residues 460–484 (KINEQIELLERMLKRNVEKKHEVEL) are a coiled coil.

The protein belongs to the BshC family.

In terms of biological role, involved in bacillithiol (BSH) biosynthesis. May catalyze the last step of the pathway, the addition of cysteine to glucosamine malate (GlcN-Mal) to generate BSH. The chain is Putative cysteine ligase BshC from Bacillus cereus (strain AH187).